Reading from the N-terminus, the 431-residue chain is Enolase (431 aa).

(2R)-2-phosphoglycerate is bound at residue Q166. The active-site Proton donor is E208. Residues D245, E288, and D315 each contribute to the Mg(2+) site. The (2R)-2-phosphoglycerate site is built by K340, R369, S370, and K391. The active-site Proton acceptor is K340.

This sequence belongs to the enolase family. Mg(2+) is required as a cofactor.

Its subcellular location is the cytoplasm. It is found in the secreted. It localises to the cell surface. It catalyses the reaction (2R)-2-phosphoglycerate = phosphoenolpyruvate + H2O. It functions in the pathway carbohydrate degradation; glycolysis; pyruvate from D-glyceraldehyde 3-phosphate: step 4/5. Its function is as follows. Catalyzes the reversible conversion of 2-phosphoglycerate (2-PG) into phosphoenolpyruvate (PEP). It is essential for the degradation of carbohydrates via glycolysis. The sequence is that of Enolase from Clostridium botulinum (strain Okra / Type B1).